The following is a 372-amino-acid chain: N-acetylneuraminate-9-phosphate synthase (372 aa).

One can recognise an AFP-like domain in the interval 314 to 372 (SIVAARNLNKGYRLQLADMAIKVSEPSGLTAEDFLDLVGKELADNIGEDEPILGNSIIN).

It carries out the reaction aldehydo-N-acetyl-D-mannosamine 6-phosphate + phosphoenolpyruvate + H2O = N-acetylneuraminate 9-phosphate + phosphate. The catalysed reaction is aldehydo-D-mannose 6-phosphate + phosphoenolpyruvate + H2O = 3-deoxy-D-glycero-beta-D-galacto-non-2-ulopyranosonate 9-phosphate + phosphate. Catalyzes the condensation of phosphoenolpyruvate (PEP) and N-acetylmannosamine 6-phosphate (ManNAc-6-P) or D-mannose 6-phosphate (Man-6-P) to generate the phosphorylated forms of both the sialic acids N-acetylneuraminic acid (Neu5Ac) and deaminoneuraminic acid (KDN), respectively. Essential for biosynthesis of sialic acids in neurons of the central nervous system. The sequence is that of N-acetylneuraminate-9-phosphate synthase from Drosophila melanogaster (Fruit fly).